A 501-amino-acid polypeptide reads, in one-letter code: Inactive cytidine monophosphate-N-acetylneuraminic acid hydroxylase (501 aa).

It belongs to the CMP-Neu5Ac hydroxylase family. Widely expressed. Highly expressed in thymus. Not expressed in brain. May be expressed in adult stem cells (at protein level).

It localises to the cytoplasm. Sialic acids are components of carbohydrate chains of glycoconjugates and are involved in cell-cell recognition and cell-pathogen interactions. That protein has no CMP-N-acetylneuraminate monooxygenase activity and is not able to convert CMP-N-acetylneuraminic acid (CMP-Neu5Ac) into its hydroxylated derivative CMP-N-glycolylneuraminic acid (CMP-Neu5Gc), a sialic acid abundantly expressed at the surface of many cells in vertebrates. However, it may play a role in Wnt signaling. This chain is Inactive cytidine monophosphate-N-acetylneuraminic acid hydroxylase (CMAHP), found in Homo sapiens (Human).